Reading from the N-terminus, the 44-residue chain is Conotoxin Sr5.5 (44 aa).

The signal sequence occupies residues methionine 1–serine 19. The propeptide occupies valine 20–histidine 29.

It belongs to the conotoxin T superfamily. In terms of processing, contains 2 disulfide bonds that can be either 'C1-C3, C2-C4' or 'C1-C4, C2-C3', since these disulfide connectivities have been observed for conotoxins with cysteine framework V (for examples, see AC P0DQQ7 and AC P81755). In terms of tissue distribution, expressed by the venom duct.

It is found in the secreted. The sequence is that of Conotoxin Sr5.5 from Conus spurius (Alphabet cone).